A 787-amino-acid polypeptide reads, in one-letter code: LPS-assembly protein LptD (787 aa).

The tract at residues 1–78 (MAAGLPPLVV…AAGAAPAESG (78 aa)) is disordered. A compositionally biased stretch (low complexity) spans 59–78 (LPPVGTPAEPAAGAAPAESG).

This sequence belongs to the LptD family. Component of the lipopolysaccharide transport and assembly complex. Interacts with LptE and LptA.

Its function is as follows. Together with LptE, is involved in the assembly of lipopolysaccharide (LPS) at the surface of the outer membrane. The chain is LPS-assembly protein LptD from Aromatoleum aromaticum (strain DSM 19018 / LMG 30748 / EbN1) (Azoarcus sp. (strain EbN1)).